The chain runs to 348 residues: NADH-ubiquinone oxidoreductase chain 2 (348 aa).

The next 10 helical transmembrane spans lie at 3 to 23 (PTVL…TFIG), 25 to 45 (HWLL…PLMI), 59 to 79 (YFIT…TNAW), 95 to 115 (ATLA…HFWL), 149 to 171 (LNSN…GGLN), 178 to 198 (ILAY…HYSP), 199 to 219 (SLTL…FLLF), 242 to 262 (VIAL…GFMP), 274 to 294 (SLII…FFYL), and 324 to 344 (LILL…PLIL).

This sequence belongs to the complex I subunit 2 family.

Its subcellular location is the mitochondrion inner membrane. The enzyme catalyses a ubiquinone + NADH + 5 H(+)(in) = a ubiquinol + NAD(+) + 4 H(+)(out). Functionally, core subunit of the mitochondrial membrane respiratory chain NADH dehydrogenase (Complex I) that is believed to belong to the minimal assembly required for catalysis. Complex I functions in the transfer of electrons from NADH to the respiratory chain. The immediate electron acceptor for the enzyme is believed to be ubiquinone. The chain is NADH-ubiquinone oxidoreductase chain 2 (MT-ND2) from Scyliorhinus canicula (Small-spotted catshark).